Here is a 328-residue protein sequence, read N- to C-terminus: MINIAIDAMGGDFGEKPIIEGVLKALEAKPFNAILVGNSKILKPLIPKKLEQYIQYEEASEIFSMNENATDALKNKETTIYKAINLLKEKKVDAVVSAGHSGASMSLATLRLGRLKGISRPAIATLMPNIVNKTLLLDVGANTDCKAENLFQFAIMGEVYAREIMQIQKPRLALLSNGEEECKGNELTKESHQLMKKIPNFIGNAEGRDIFNGEIDVLVCDGFDGNVILKACEGVATAIFQLLKNEVKQSFISKIGALLMKPSFKKLKKHTDWQEYGGAPLLGVNGCVIISHGKSDSRAIKNAIFQAINFSQSHINKLIENELGKYNA.

This sequence belongs to the PlsX family. In terms of assembly, homodimer. Probably interacts with PlsY.

The protein localises to the cytoplasm. It carries out the reaction a fatty acyl-[ACP] + phosphate = an acyl phosphate + holo-[ACP]. It functions in the pathway lipid metabolism; phospholipid metabolism. In terms of biological role, catalyzes the reversible formation of acyl-phosphate (acyl-PO(4)) from acyl-[acyl-carrier-protein] (acyl-ACP). This enzyme utilizes acyl-ACP as fatty acyl donor, but not acyl-CoA. The chain is Phosphate acyltransferase from Campylobacter jejuni subsp. jejuni serotype O:23/36 (strain 81-176).